A 97-amino-acid polypeptide reads, in one-letter code: Defensin-like protein 196 (97 aa).

The N-terminal stretch at 1 to 28 is a signal peptide; it reads MAKMSALSIFAIFIILVLVIFEIPEIEA. 4 disulfide bridges follow: Cys33/Cys85, Cys46/Cys70, Cys55/Cys80, and Cys59/Cys82.

Belongs to the DEFL family. Protease inhibitor I18 (RTI/MTI-2) subfamily.

It is found in the secreted. This is Defensin-like protein 196 (ATTI4) from Arabidopsis thaliana (Mouse-ear cress).